A 447-amino-acid polypeptide reads, in one-letter code: Glutamate--tRNA ligase 1 (447 aa).

The short motif at 10–20 is the 'HIGH' region element; the sequence is PSPTGMLHVGN. Residues 240 to 244 carry the 'KMSKS' region motif; that stretch reads KISKR. Lys243 contributes to the ATP binding site.

The protein belongs to the class-I aminoacyl-tRNA synthetase family. Glutamate--tRNA ligase type 1 subfamily. In terms of assembly, monomer.

The protein localises to the cytoplasm. It carries out the reaction tRNA(Glu) + L-glutamate + ATP = L-glutamyl-tRNA(Glu) + AMP + diphosphate. In terms of biological role, catalyzes the attachment of glutamate to tRNA(Glu) in a two-step reaction: glutamate is first activated by ATP to form Glu-AMP and then transferred to the acceptor end of tRNA(Glu). This chain is Glutamate--tRNA ligase 1, found in Rickettsia rickettsii (strain Sheila Smith).